Here is a 262-residue protein sequence, read N- to C-terminus: Proline-rich protein 23C (262 aa).

2 disordered regions span residues 1 to 52 and 225 to 262; these read MGSR…AGTP and VPSS…LFQE. Over residues 226–242 the composition is skewed to pro residues; sequence PSSPLQPLPPSPSPGPH. Residues 243–252 are compositionally biased toward basic and acidic residues; the sequence is ARPELPERPP. Positions 253 to 262 are enriched in basic residues; the sequence is CKVRRRLFQE.

It belongs to the PRR23 family.

The sequence is that of Proline-rich protein 23C (PRR23C) from Homo sapiens (Human).